A 335-amino-acid polypeptide reads, in one-letter code: Capsular polysaccharide phosphotransferase WcwK (335 aa).

Belongs to the stealth family.

The protein is Capsular polysaccharide phosphotransferase WcwK (wcwK) of Streptococcus pneumoniae.